A 109-amino-acid chain; its full sequence is Small serum protein 2 (109 aa).

The N-terminal stretch at 1 to 19 (MRVFFSLIIFSFMLATCQG) is a signal peptide. Cystine bridges form between Cys-21-Cys-72, Cys-39-Cys-64, Cys-59-Cys-93, Cys-62-Cys-71, and Cys-84-Cys-107.

As to quaternary structure, forms a stable, non-covalent complex with serotriflin.

The protein resides in the secreted. In terms of biological role, may serve as a self-defense protein against the toxic effects of the snake venom during accidental envenomation. Does not show inhibitory activity towards brevilysin H6. This Protobothrops flavoviridis (Habu) protein is Small serum protein 2.